Reading from the N-terminus, the 262-residue chain is Putative protein-methionine-sulfoxide reductase subunit YedZ1 (262 aa).

This sequence belongs to the MsrP family.

In terms of biological role, part of the YedY1-YedZ1 system that may repair oxidized proteins containing methionine sulfoxide residues (Met-O). This Azospira oryzae (strain ATCC BAA-33 / DSM 13638 / PS) (Dechlorosoma suillum) protein is Putative protein-methionine-sulfoxide reductase subunit YedZ1.